A 211-amino-acid polypeptide reads, in one-letter code: Octanoyltransferase (211 aa).

Residues 28 to 203 (GSAPETLLLV…HFQSLLKTWL (176 aa)) form the BPL/LPL catalytic domain. Substrate contacts are provided by residues 66–73 (RGGDITYH), 133–135 (SIG), and 146–148 (GFA). Cys-164 (acyl-thioester intermediate) is an active-site residue.

It belongs to the LipB family.

The protein localises to the cytoplasm. The catalysed reaction is octanoyl-[ACP] + L-lysyl-[protein] = N(6)-octanoyl-L-lysyl-[protein] + holo-[ACP] + H(+). It participates in protein modification; protein lipoylation via endogenous pathway; protein N(6)-(lipoyl)lysine from octanoyl-[acyl-carrier-protein]: step 1/2. Its function is as follows. Catalyzes the transfer of endogenously produced octanoic acid from octanoyl-acyl-carrier-protein onto the lipoyl domains of lipoate-dependent enzymes. Lipoyl-ACP can also act as a substrate although octanoyl-ACP is likely to be the physiological substrate. This chain is Octanoyltransferase, found in Syntrophotalea carbinolica (strain DSM 2380 / NBRC 103641 / GraBd1) (Pelobacter carbinolicus).